We begin with the raw amino-acid sequence, 318 residues long: Ubiquitin-like domain-containing CTD phosphatase 1 (318 aa).

The Ubiquitin-like domain occupies 3–81 (LSLIIKWGGQ…IMMMGTREES (79 aa)). The region spanning 133–294 (PREGKKLLVL…LKLTQYLKEI (162 aa)) is the FCP1 homology domain. Mg(2+)-binding residues include D143, D145, and D253.

Mg(2+) is required as a cofactor.

Its subcellular location is the nucleus. It carries out the reaction O-phospho-L-seryl-[protein] + H2O = L-seryl-[protein] + phosphate. The enzyme catalyses O-phospho-L-threonyl-[protein] + H2O = L-threonyl-[protein] + phosphate. Functionally, dephosphorylates 26S nuclear proteasomes, thereby decreasing their proteolytic activity. Recruited to the 19S regulatory particle of the 26S proteasome where it dephosphorylates 19S component PSMC2 which impairs PSMC2 ATPase activity and disrupts 26S proteasome assembly. Has also been reported to stimulate the proteolytic activity of the 26S proteasome. The polypeptide is Ubiquitin-like domain-containing CTD phosphatase 1 (UBLCP1) (Gallus gallus (Chicken)).